We begin with the raw amino-acid sequence, 188 residues long: Pyridoxal 5'-phosphate synthase subunit PdxT (188 aa).

Position 46 to 48 (46 to 48) interacts with L-glutamine; that stretch reads GES. Catalysis depends on cysteine 78, which acts as the Nucleophile. Residues arginine 106 and 132-133 each bind L-glutamine; that span reads IR. Residues histidine 169 and glutamate 171 each act as charge relay system in the active site.

It belongs to the glutaminase PdxT/SNO family. In the presence of PdxS, forms a dodecamer of heterodimers. Only shows activity in the heterodimer.

It carries out the reaction aldehydo-D-ribose 5-phosphate + D-glyceraldehyde 3-phosphate + L-glutamine = pyridoxal 5'-phosphate + L-glutamate + phosphate + 3 H2O + H(+). The catalysed reaction is L-glutamine + H2O = L-glutamate + NH4(+). It functions in the pathway cofactor biosynthesis; pyridoxal 5'-phosphate biosynthesis. In terms of biological role, catalyzes the hydrolysis of glutamine to glutamate and ammonia as part of the biosynthesis of pyridoxal 5'-phosphate. The resulting ammonia molecule is channeled to the active site of PdxS. The protein is Pyridoxal 5'-phosphate synthase subunit PdxT of Tropheryma whipplei (strain Twist) (Whipple's bacillus).